We begin with the raw amino-acid sequence, 218 residues long: PKHD-type hydroxylase Sala_1910 (218 aa).

Residues 74–172 (RIAPPLLTRY…RLVAITFIQS (99 aa)) enclose the Fe2OG dioxygenase domain. Residues histidine 92, aspartate 94, and histidine 153 each coordinate Fe cation. Residue arginine 163 participates in 2-oxoglutarate binding.

Fe(2+) is required as a cofactor. It depends on L-ascorbate as a cofactor.

This chain is PKHD-type hydroxylase Sala_1910, found in Sphingopyxis alaskensis (strain DSM 13593 / LMG 18877 / RB2256) (Sphingomonas alaskensis).